Here is a 674-residue protein sequence, read N- to C-terminus: Amino-acid acetyltransferase, mitochondrial (674 aa).

The transit peptide at 1 to 50 (MPLVAAMLTRSNGAWKKATSVVQASICRDQQRPNHTTITSVTSVSQRRHF) directs the protein to the mitochondrion. Residues 33–45 (PNHTTITSVTSVS) show a composition bias toward polar residues. The interval 33-74 (PNHTTITSVTSVSQRRHFSSAENGAKPSRSHPSAAEAKQKRE) is disordered. The 169-residue stretch at 497-665 (GTPRLKLTDT…YEDVCRGVVP (169 aa)) folds into the N-acetyltransferase domain.

This sequence belongs to the acetyltransferase family.

It localises to the mitochondrion. The catalysed reaction is L-glutamate + acetyl-CoA = N-acetyl-L-glutamate + CoA + H(+). Its pathway is amino-acid biosynthesis; L-arginine biosynthesis; N(2)-acetyl-L-ornithine from L-glutamate: step 1/4. Its function is as follows. N-acetylglutamate synthase involved in arginine biosynthesis. This is Amino-acid acetyltransferase, mitochondrial (ARG2) from Podospora anserina (strain S / ATCC MYA-4624 / DSM 980 / FGSC 10383) (Pleurage anserina).